The primary structure comprises 252 residues: Hydroxyacylglutathione hydrolase (252 aa).

Positions 54, 56, 58, 59, 111, 130, and 170 each coordinate Zn(2+).

This sequence belongs to the metallo-beta-lactamase superfamily. Glyoxalase II family. Monomer. Zn(2+) serves as cofactor.

It catalyses the reaction an S-(2-hydroxyacyl)glutathione + H2O = a 2-hydroxy carboxylate + glutathione + H(+). It functions in the pathway secondary metabolite metabolism; methylglyoxal degradation; (R)-lactate from methylglyoxal: step 2/2. Thiolesterase that catalyzes the hydrolysis of S-D-lactoyl-glutathione to form glutathione and D-lactic acid. This chain is Hydroxyacylglutathione hydrolase, found in Francisella tularensis subsp. novicida (strain U112).